A 564-amino-acid chain; its full sequence is Eukaryotic translation initiation factor 3 subunit L (564 aa).

The residue at position 2 (Ser2) is an N-acetylserine. The region spanning 331 to 537 (DAIRVFANIL…IHIADTKVAR (207 aa)) is the PCI domain. 2 positions are modified to N6-acetyllysine: Lys465 and Lys549.

Belongs to the eIF-3 subunit L family. As to quaternary structure, component of the eukaryotic translation initiation factor 3 (eIF-3) complex, which is composed of 13 subunits: EIF3A, EIF3B, EIF3C, EIF3D, EIF3E, EIF3F, EIF3G, EIF3H, EIF3I, EIF3J, EIF3K, EIF3L and EIF3M. The eIF-3 complex appears to include 3 stable modules: module A is composed of EIF3A, EIF3B, EIF3G and EIF3I; module B is composed of EIF3F, EIF3H, and EIF3M; and module C is composed of EIF3C, EIF3D, EIF3E, EIF3K and EIF3L. EIF3C of module C binds EIF3B of module A and EIF3H of module B, thereby linking the three modules. EIF3J is a labile subunit that binds to the eIF-3 complex via EIF3B. The eIF-3 complex interacts with RPS6KB1 under conditions of nutrient depletion. Mitogenic stimulation leads to binding and activation of a complex composed of MTOR and RPTOR, leading to phosphorylation and release of RPS6KB1 and binding of EIF4B to eIF-3. Interacts with RRN3.

It is found in the cytoplasm. In terms of biological role, component of the eukaryotic translation initiation factor 3 (eIF-3) complex, which is required for several steps in the initiation of protein synthesis. The eIF-3 complex associates with the 40S ribosome and facilitates the recruitment of eIF-1, eIF-1A, eIF-2:GTP:methionyl-tRNAi and eIF-5 to form the 43S pre-initiation complex (43S PIC). The eIF-3 complex stimulates mRNA recruitment to the 43S PIC and scanning of the mRNA for AUG recognition. The eIF-3 complex is also required for disassembly and recycling of post-termination ribosomal complexes and subsequently prevents premature joining of the 40S and 60S ribosomal subunits prior to initiation. The eIF-3 complex specifically targets and initiates translation of a subset of mRNAs involved in cell proliferation, including cell cycling, differentiation and apoptosis, and uses different modes of RNA stem-loop binding to exert either translational activation or repression. The sequence is that of Eukaryotic translation initiation factor 3 subunit L from Bos taurus (Bovine).